A 97-amino-acid polypeptide reads, in one-letter code: Large ribosomal subunit protein uL23 (97 aa).

This sequence belongs to the universal ribosomal protein uL23 family. In terms of assembly, part of the 50S ribosomal subunit. Contacts protein L29, and trigger factor when it is bound to the ribosome.

One of the early assembly proteins it binds 23S rRNA. One of the proteins that surrounds the polypeptide exit tunnel on the outside of the ribosome. Forms the main docking site for trigger factor binding to the ribosome. In Allorhizobium ampelinum (strain ATCC BAA-846 / DSM 112012 / S4) (Agrobacterium vitis (strain S4)), this protein is Large ribosomal subunit protein uL23.